We begin with the raw amino-acid sequence, 88 residues long: MANTASAKKMTRKIAKRTAINRSRRSRMRTFVRKVEEAIASGNQQDALAALRAAEPEMMRAAQHGIVHKNNASRKVSRLAARVKALAA.

Residues 1–27 (MANTASAKKMTRKIAKRTAINRSRRSR) are disordered.

This sequence belongs to the bacterial ribosomal protein bS20 family.

Binds directly to 16S ribosomal RNA. The chain is Small ribosomal subunit protein bS20 from Methylobacterium radiotolerans (strain ATCC 27329 / DSM 1819 / JCM 2831 / NBRC 15690 / NCIMB 10815 / 0-1).